Consider the following 84-residue polypeptide: Putative antitoxin VapB7 (84 aa).

Its function is as follows. Antitoxin component of a possible type II toxin-antitoxin (TA) system. The cognate toxin is VapC7. This is Putative antitoxin VapB7 (vapB7) from Mycobacterium tuberculosis (strain ATCC 25618 / H37Rv).